We begin with the raw amino-acid sequence, 142 residues long: MATKKKVAGLIKLQIQAGQANPAPPVGPALGQHGVNIMEFCKAYNAATENQRGQVIPVEITVYEDRSFTFALKTPPAAKLLLDAAGVGKGVAEPHKTKVVKVSWDQVREIAETKKADLNANDIDAAAKIIAGTARSMGITVE.

It belongs to the universal ribosomal protein uL11 family. As to quaternary structure, part of the ribosomal stalk of the 50S ribosomal subunit. Interacts with L10 and the large rRNA to form the base of the stalk. L10 forms an elongated spine to which L12 dimers bind in a sequential fashion forming a multimeric L10(L12)X complex. Post-translationally, one or more lysine residues are methylated.

Functionally, forms part of the ribosomal stalk which helps the ribosome interact with GTP-bound translation factors. This is Large ribosomal subunit protein uL11 from Mycobacterium leprae (strain Br4923).